The primary structure comprises 236 residues: Aminopyrimidine aminohydrolase (236 aa).

Substrate is bound at residue Asp-44. The active-site Nucleophile is the Cys-135. Residues Tyr-139 and Tyr-163 each contribute to the substrate site. Glu-205 acts as the Proton donor in catalysis.

Belongs to the TenA family. In terms of assembly, homotetramer.

The catalysed reaction is 4-amino-5-aminomethyl-2-methylpyrimidine + H2O = 4-amino-5-hydroxymethyl-2-methylpyrimidine + NH4(+). It catalyses the reaction thiamine + H2O = 5-(2-hydroxyethyl)-4-methylthiazole + 4-amino-5-hydroxymethyl-2-methylpyrimidine + H(+). The protein operates within cofactor biosynthesis; thiamine diphosphate biosynthesis. Functionally, catalyzes an amino-pyrimidine hydrolysis reaction at the C5' of the pyrimidine moiety of thiamine compounds, a reaction that is part of a thiamine salvage pathway. Thus, catalyzes the conversion of 4-amino-5-aminomethyl-2-methylpyrimidine to 4-amino-5-hydroxymethyl-2-methylpyrimidine (HMP). To a lesser extent, is also able to catalyze the hydrolytic cleavage of thiamine; however, this thiaminase activity is unlikely to be physiologically relevant. Therefore, is involved in the regeneration of the thiamine pyrimidine from thiamine degraded products present in the environment, rather than in thiamine degradation. This chain is Aminopyrimidine aminohydrolase, found in Bacillus subtilis (strain 168).